A 516-amino-acid chain; its full sequence is Replication factor C large subunit (516 aa).

44-51 (GAPGVGKT) contributes to the ATP binding site. The segment at 421 to 516 (RSEAVEAHAG…DGQAGLSEFM (96 aa)) is disordered. A compositionally biased stretch (basic and acidic residues) spans 454–467 (VQSHKSAESGDDTV). Over residues 479–496 (QSGASETASATESASDSD) the composition is skewed to low complexity. Acidic residues predominate over residues 497 to 508 (ASTDTDADDDDG).

Belongs to the activator 1 small subunits family. RfcL subfamily. In terms of assembly, heteromultimer composed of small subunits (RfcS) and large subunits (RfcL).

Functionally, part of the RFC clamp loader complex which loads the PCNA sliding clamp onto DNA. This Haloquadratum walsbyi (strain DSM 16790 / HBSQ001) protein is Replication factor C large subunit.